An 831-amino-acid polypeptide reads, in one-letter code: Cysteine--tRNA ligase, cytoplasmic (831 aa).

Alanine 2 carries the N-acetylalanine modification. Serine 102 is modified (phosphoserine). Cysteine 138 contacts Zn(2+). Glycine 139 contacts L-cysteine. The 'HIGH' region signature appears at 140-150 (PTVYDASHMGH). Residue threonine 179 coordinates L-cysteine. The short motif at 184 to 187 (KIIR) is the 'KIIK' region element. A phosphoserine mark is found at serine 388 and serine 390. Residues cysteine 431, histidine 456, and glutamate 460 each contribute to the Zn(2+) site. L-cysteine is bound at residue histidine 456. A 'KMSKS' region motif is present at residues 489–493 (KMSKS). Lysine 492 provides a ligand contact to ATP. Basic and acidic residues predominate over residues 736–762 (GKKRAEEEKRRKKEEAARKKQEQEAAK). The interval 736-766 (GKKRAEEEKRRKKEEAARKKQEQEAAKLAKM) is disordered. Phosphoserine is present on serine 829.

It belongs to the class-I aminoacyl-tRNA synthetase family. As to quaternary structure, homodimer. It depends on Zn(2+) as a cofactor.

The protein localises to the cytoplasm. It carries out the reaction tRNA(Cys) + L-cysteine + ATP = L-cysteinyl-tRNA(Cys) + AMP + diphosphate. Functionally, catalyzes the ATP-dependent ligation of cysteine to tRNA(Cys). In Mus musculus (Mouse), this protein is Cysteine--tRNA ligase, cytoplasmic (Cars1).